The sequence spans 155 residues: Endoribonuclease YbeY (155 aa).

Positions 116, 120, and 126 each coordinate Zn(2+).

The protein belongs to the endoribonuclease YbeY family. The cofactor is Zn(2+).

It localises to the cytoplasm. Its function is as follows. Single strand-specific metallo-endoribonuclease involved in late-stage 70S ribosome quality control and in maturation of the 3' terminus of the 16S rRNA. The protein is Endoribonuclease YbeY of Colwellia psychrerythraea (strain 34H / ATCC BAA-681) (Vibrio psychroerythus).